A 514-amino-acid polypeptide reads, in one-letter code: MSLTEEIKKRRTFAIISHPDAGKTTITEQLLYFGGEIREAGTVKGKKSGTFAKSDWMDIEKQRGISVTSSVMQFDYAGKRVNILDTPGHEDFSEDTYRTLMAVDAAVMVVDSAKGIEAQTKKLFEVVKHRNIPVFTFINKLDRDGREPLELLEELEEVLGIASYPMNWPIGMGRAFEGLYDLHNKRLELYKGDERFASIEDGDQLFANNPFYEQVKEDIELLQEAGNDFSEQAILDGDLTPVFFGSALTNFGVQTFLDTFLEFAPEPHGHKTTEGNVVDPLTKDFSGFVFKIQANMDPKHRDRIAFVRIVSGEFERGMGVNLTRTGKGAKLSNVTQFMAESRENVTNAVAGDIIGVYDTGTYQVGDTLTVGKNKFEFEPLPTFTPEIFMKVSPKNVMKQKSFHKGIEQLVQEGAIQLYKNYQTGEYMLGAVGQLQFEVFKHRMEGEYNAEVVMTPMGKKTVRWISEDDLDQHMSSSRNILAKDRFDQPVFLFENDFALRWFADKYPDVTLEEKM.

The 261-residue stretch at Lys-8–His-268 folds into the tr-type G domain. GTP-binding positions include Ser-17 to Thr-24, Asp-85 to His-89, and Asn-139 to Asp-142.

Belongs to the TRAFAC class translation factor GTPase superfamily. Classic translation factor GTPase family. PrfC subfamily.

It is found in the cytoplasm. Increases the formation of ribosomal termination complexes and stimulates activities of RF-1 and RF-2. It binds guanine nucleotides and has strong preference for UGA stop codons. It may interact directly with the ribosome. The stimulation of RF-1 and RF-2 is significantly reduced by GTP and GDP, but not by GMP. This is Peptide chain release factor 3 from Streptococcus pyogenes serotype M49 (strain NZ131).